The primary structure comprises 460 residues: Crocetin glucosyltransferase 2 (460 aa).

Histidine 19 (proton acceptor) is an active-site residue. Histidine 19 provides a ligand contact to an anthocyanidin. UDP-alpha-D-glucose-binding residues include threonine 133, glutamine 333, histidine 348, tryptophan 351, asparagine 352, serine 353, glutamate 356, aspartate 372, and glutamine 373.

The protein belongs to the UDP-glycosyltransferase family. As to expression, mainly expressed in fully developed stigmas.

It catalyses the reaction crocetin + UDP-alpha-D-glucose = beta-D-glucosyl crocetin + UDP. The enzyme catalyses beta-D-glucosyl crocetin + UDP-alpha-D-glucose = bis(beta-D-glucosyl) crocetin + UDP. The catalysed reaction is beta-D-gentiobiosyl crocetin + UDP-alpha-D-glucose = beta-D-gentiobiosyl beta-D-glucosyl crocetin + UDP. In terms of biological role, crocetin glucosyltransferase involved in the synthesis of crocin, one of the apocarotenoids responsible for the color and bitter taste of saffron. The protein is Crocetin glucosyltransferase 2 (GLT2) of Crocus sativus (Saffron).